We begin with the raw amino-acid sequence, 93 residues long: Acylphosphatase (93 aa).

Cys-5 and Cys-49 are joined by a disulfide. The region spanning 5-93 (CIIAWVYGRV…ETLTGFSIRY (89 aa)) is the Acylphosphatase-like domain. Residue Asn-38 is part of the active site.

The protein belongs to the acylphosphatase family.

The enzyme catalyses an acyl phosphate + H2O = a carboxylate + phosphate + H(+). The protein is Acylphosphatase of Salmonella paratyphi A (strain ATCC 9150 / SARB42).